We begin with the raw amino-acid sequence, 872 residues long: MKELSSAQIRQMWLDFWKSKGHCVEPSANLVPVNDPTLLWINSGVATLKKYFDGSVIPENPRITNAQKSIRTNDIENVGKTARHHTMFEMLGNFSIGDYFRDEAIEWGFELLTSPDWFDFPKDKLYMTYYPDDKDSYNRWIACGVEPSHLVPIEDNFWEIGAGPSGPDTEIFFDRGEDFDPENIGLRLLAEDIENDRYIEIWNIVLSQFNADPAVPRSEYKELPNKNIDTGAGLERLAAVMQGAKTNFETDLFMPIIREVEKLSGKTYNPDGDNMSFKVIADHIRALSFAIGDGALPGNEGRGYVLRRLLRRAVMHGRRLGINETFLYKLVLTVGQIMESYYPEVLEKRDFIEKIVKREEETFARTIDAGSGHLDSLLAQLKAEGKDTLEGKDIFKLYDTYGFPVELTEELAEDAGYKIDHEGFKSAMKEQQDRARAAVVKGGSMGMQNETLAGIVEESRFEYDTYSLESSLSVIIADNERTEAVSEGQALLVFAQTPFYAEMGGQVADTGRIKNDKGDTVAEVVDVQKAPNGQPLHTVNVLASLSVGTNYTLEINKERRLAVEKNHTATHLLHAALHNVIGEHATQAGSLNEEEFLRFDFTHFEAVSNEELRHIEQEVNEQIWNALTITTTETDVETAKEMGAMALFGEKYGKVVRVVQIGNYSVELCGGTHLNNSSEIGLFKIVKEEGIGSGTRRIIAVTGRQAFEAYRNQEDALKEIAATVKAPQLKDAAAKVQALSDSLRDLQKENAELKEKAAAAAAGDVFKDVQEAKGVRFIASQVDVADAGALRTFADNWKQKDYSDVLVLVAAIGEKVNVLVASKTKDVHAGNMIKELAPIVAGRGGGKPDMAMAGGSDASKIAELLAAVAETV.

The Zn(2+) site is built by His-567, His-571, Cys-669, and His-673.

The protein belongs to the class-II aminoacyl-tRNA synthetase family. The cofactor is Zn(2+).

It localises to the cytoplasm. The catalysed reaction is tRNA(Ala) + L-alanine + ATP = L-alanyl-tRNA(Ala) + AMP + diphosphate. In terms of biological role, catalyzes the attachment of alanine to tRNA(Ala) in a two-step reaction: alanine is first activated by ATP to form Ala-AMP and then transferred to the acceptor end of tRNA(Ala). Also edits incorrectly charged Ser-tRNA(Ala) and Gly-tRNA(Ala) via its editing domain. The chain is Alanine--tRNA ligase from Streptococcus pyogenes serotype M4 (strain MGAS10750).